We begin with the raw amino-acid sequence, 306 residues long: Aquaporin-1 (306 aa).

A compositionally biased stretch (polar residues) spans 1 to 23 (MASTHSSLTTVQNNANNKSNRTL). The tract at residues 1 to 24 (MASTHSSLTTVQNNANNKSNRTLN) is disordered. Residues 1 to 59 (MASTHSSLTTVQNNANNKSNRTLNTERRLSMESSVFTLYNKAADELDTSQRSAFQACHR) are Cytoplasmic-facing. The chain crosses the membrane as a helical span at residues 60-80 (EFLAEFIGTVILVLLTCGFCA). At 81 to 92 (EQTLHIEESKSW) the chain is on the extracellular side. Residues 93–113 (LTSSFGSGLSVLIGICVSGHV) form a helical membrane-spanning segment. Over 114–145 (SGAHLNPAVTIAFCIFSGFPIRKVPSYITAQL) the chain is Cytoplasmic. An NPA 1 motif is present at residues 119 to 121 (NPA). Residues 146-166 (LGAFAGAALLYIIIEPAIVQF) form a helical membrane-spanning segment. The Extracellular portion of the chain corresponds to 167-192 (DGGQRYILGEKSTAGIFGTYPPLYVG). Residues 193–213 (IGSAIASEIMGTAMLLLVIMV) form a helical membrane-spanning segment. Residues 214 to 226 (TGHPNNLPYKSAQ) lie on the Cytoplasmic side of the membrane. The chain crosses the membrane as a helical span at residues 227 to 247 (GAMIALGITTISLCIGYTSGF). Over 248 to 278 (SLNPARDFGPRLFTAIAGWGFDVFKVYHYYA) the chain is Extracellular. The NPA 2 motif lies at 250–252 (NPA). Residues 279–299 (LVPMFAPILGGLVGLMLMMPF) traverse the membrane as a helical segment. Residues 300–306 (SFLSVRA) lie on the Cytoplasmic side of the membrane.

Belongs to the MIP/aquaporin (TC 1.A.8) family.

The protein resides in the cell membrane. It carries out the reaction H2O(in) = H2O(out). Its function is as follows. Water channel required to facilitate the transport of water across membranes. Contributes to water uptake of spores during the early stages of spore germination. Aquaporins AQP1 and AQP2 act as extracellular pH sensors and enable the spores to hydrate under favorable conditions and to commence germination. Wounded vegetables and fruit present acidic pH, so the optimal pH range for germination is adapted to the relevant host pH. This chain is Aquaporin-1, found in Rhizopus delemar (strain RA 99-880 / ATCC MYA-4621 / FGSC 9543 / NRRL 43880) (Mucormycosis agent).